The primary structure comprises 197 residues: Adenylate kinase (197 aa).

19-24 (GSGKGT) lines the ATP pocket. Residues 39–68 (SSGDLLRAEVQSGSPKGKELKAMMERGELV) are NMP. Residues Ser-40, Arg-45, 66–68 (ELV), 95–98 (RYPR), and Gln-102 contribute to the AMP site. The LID stretch occupies residues 132–142 (KRAETSNRVDD). Position 133 (Arg-133) interacts with ATP. AMP is bound by residues Arg-139 and Arg-150. Gly-178 serves as a coordination point for ATP.

This sequence belongs to the adenylate kinase family. As to quaternary structure, monomer.

It localises to the cytoplasm. The enzyme catalyses AMP + ATP = 2 ADP. In terms of biological role, catalyzes the reversible transfer of the terminal phosphate group between ATP and AMP. Plays an important role in cellular energy homeostasis and in adenine nucleotide metabolism. This chain is Adenylate kinase, found in Schistosoma mansoni (Blood fluke).